A 184-amino-acid chain; its full sequence is RNA 2',3'-cyclic phosphodiesterase (184 aa).

Residue His40 is the Proton donor of the active site. 2 consecutive short sequence motifs (HXTX) follow at residues 40–43 (HITL) and 125–128 (HITL). Residue His125 is the Proton acceptor of the active site.

Belongs to the 2H phosphoesterase superfamily. ThpR family.

The enzyme catalyses a 3'-end 2',3'-cyclophospho-ribonucleotide-RNA + H2O = a 3'-end 2'-phospho-ribonucleotide-RNA + H(+). Hydrolyzes RNA 2',3'-cyclic phosphodiester to an RNA 2'-phosphomonoester. In vitro, ligates 5' and 3' half-tRNA molecules with 2',3'-cyclic phosphate and 5'-hydroxyl termini, respectively, to the product containing the 2'-5' phosphodiester linkage. Ligase activity requires GTP, but GTP hydrolysis is not required for the reaction, which is reversible. Ligase activity is weak compared to the phosphodiesterase activity. The chain is RNA 2',3'-cyclic phosphodiesterase from Pyrococcus furiosus (strain ATCC 43587 / DSM 3638 / JCM 8422 / Vc1).